The chain runs to 325 residues: MARKKISVIGAGNVGATVAQFLATKELGDVYLFDVVDGIPEGKALDIQEGAPHWGYDLDVVGFSTSDSSNYKNMEGSDVIVVTAGMARKPGMSREDLFDKNVEIIADVSKNIKKYSPDSIIVVVSNPADIMAYALQKISGVDPQRIMGLGGSLDSSRFRTFLAKELDVSVEDVNAFVIGGHGDDMVPFIRYSSVAGIPIEKLLPKEKIDAIVKRTRFGGGEIVNYLKAGSAYYAPGISITAMVESVIKDKKRVIPCAAYITGKHAEHYGINNKFIGVPIKIGERGVEEIYDIDFLPEELELWKKSVASVEASSKNVDEWLKKHPQ.

Residues 10-15 (GAGNVG) and Asp34 contribute to the NAD(+) site. 2 residues coordinate substrate: Arg88 and Arg94. NAD(+) is bound by residues Asn101 and 124–126 (VSN). Residues Asn126 and Arg157 each coordinate substrate. Catalysis depends on His181, which acts as the Proton acceptor.

It belongs to the LDH/MDH superfamily.

The catalysed reaction is (S)-malate + NAD(+) = oxaloacetate + NADH + H(+). Catalyzes the reversible oxidation of malate to oxaloacetate. The chain is Malate dehydrogenase (mdh) from Thermoplasma volcanium (strain ATCC 51530 / DSM 4299 / JCM 9571 / NBRC 15438 / GSS1).